We begin with the raw amino-acid sequence, 130 residues long: Phosphomevalonate dehydratase small subunit (130 aa).

The active-site Proton acceptor is Ser-62.

The protein belongs to the AcnX type II small subunit family. Heterodimer composed of a large subunit (PMDh-L) and a small subunit (PMDh-S).

The catalysed reaction is (R)-5-phosphomevalonate = (2E)-3-methyl-5-phosphooxypent-2-enoate + H2O. It functions in the pathway isoprenoid biosynthesis; isopentenyl diphosphate biosynthesis via mevalonate pathway. Functionally, component of a hydro-lyase that catalyzes the dehydration of mevalonate 5-phosphate (MVA5P) to form trans-anhydromevalonate 5-phosphate (tAHMP). Involved in the archaeal mevalonate (MVA) pathway, which provides fundamental precursors for isoprenoid biosynthesis, such as isopentenyl diphosphate (IPP) and dimethylallyl diphosphate (DMAPP). The chain is Phosphomevalonate dehydratase small subunit from Thermococcus sibiricus (strain DSM 12597 / MM 739).